Here is a 523-residue protein sequence, read N- to C-terminus: Xanthotoxin 5-hydroxylase CYP82C2 (523 aa).

The chain crosses the membrane as a helical span at residues 1–21 (MDTSLFSLFVPILVFVFIALF). Heme is bound at residue cysteine 462.

It belongs to the cytochrome P450 family. Heme is required as a cofactor.

Its subcellular location is the membrane. The catalysed reaction is xanthotoxin + reduced [NADPH--hemoprotein reductase] + O2 = 5-hydroxyxanthotoxin + oxidized [NADPH--hemoprotein reductase] + H2O + 2 H(+). The enzyme catalyses indole-3-carbonyl nitrile + reduced [NADPH--hemoprotein reductase] + O2 = 4-hydroxy-indole-3-carbonyl nitrile + oxidized [NADPH--hemoprotein reductase] + H2O + H(+). Involved in the biosynthetic pathway to 4-hydroxyindole-3-carbonyl nitrile (4-OH-ICN), a cyanogenic metabolite required for inducible pathogen defense. Converts indole-3-carbonyl nitrile (ICN) into 4-OH-ICN. Can hydroxylate xanthotoxin (8-methoxypsoralen) to form 5-hydroxyxanthotoxin (5-hydroxy-8-methoxypsoralen) in vivo and in vitro. In Arabidopsis thaliana (Mouse-ear cress), this protein is Xanthotoxin 5-hydroxylase CYP82C2.